The sequence spans 299 residues: Protein bem46 (299 aa).

Residues 15–32 traverse the membrane as a helical segment; it reads YSGMASLAVTLIALGFLY.

The protein belongs to the serine esterase family.

It localises to the membrane. Functionally, suppressor of bem1/bud5. The polypeptide is Protein bem46 (bem46) (Schizosaccharomyces pombe (strain 972 / ATCC 24843) (Fission yeast)).